Consider the following 53-residue polypeptide: Rho GTPase-activating protein 6 (53 aa).

It is found in the cytoplasm. In terms of biological role, GTPase activator for the Rho-type GTPases by converting them to an inactive GDP-bound state. Could regulate the interactions of signaling molecules with the actin cytoskeleton. Promotes continuous elongation of cytoplasmic processes during cell motility and simultaneous retraction of the cell body changing the cell morphology. This chain is Rho GTPase-activating protein 6 (arhgap6), found in Takifugu rubripes (Japanese pufferfish).